We begin with the raw amino-acid sequence, 697 residues long: Potassium-transporting ATPase ATP-binding subunit (697 aa).

Transmembrane regions (helical) follow at residues 55 to 75 (PIMF…FLPS), 79 to 99 (SIPG…VLFA), 245 to 265 (LTLI…YLGF), and 271 to 291 (VLVA…LSAI). The active-site 4-aspartylphosphate intermediate is Asp-324. Residues Asp-361, Glu-365, 393–400 (FKAETRMS), and Lys-412 each bind ATP. Mg(2+)-binding residues include Asp-535 and Asp-539. The next 3 membrane-spanning stretches (helical) occupy residues 605 to 625 (FAII…LNIM), 633 to 653 (AILS…PLAM), and 677 to 697 (GGVI…GLFI).

Belongs to the cation transport ATPase (P-type) (TC 3.A.3) family. Type IA subfamily. The system is composed of three essential subunits: KdpA, KdpB and KdpC.

The protein localises to the cell membrane. The catalysed reaction is K(+)(out) + ATP + H2O = K(+)(in) + ADP + phosphate + H(+). Functionally, part of the high-affinity ATP-driven potassium transport (or Kdp) system, which catalyzes the hydrolysis of ATP coupled with the electrogenic transport of potassium into the cytoplasm. This subunit is responsible for energy coupling to the transport system and for the release of the potassium ions to the cytoplasm. This Bacillus cereus (strain ZK / E33L) protein is Potassium-transporting ATPase ATP-binding subunit.